The sequence spans 25 residues: Phospholipase A1 verutoxin-2a (25 aa).

It belongs to the AB hydrolase superfamily. Lipase family. Contains six disulfide bonds. Expressed by the venom gland.

It localises to the secreted. It catalyses the reaction a 1,2-diacyl-sn-glycero-3-phosphocholine + H2O = a 2-acyl-sn-glycero-3-phosphocholine + a fatty acid + H(+). It carries out the reaction 1-(9Z-octadecenoyl)-2-hexadecanoyl-sn-glycero-3-phosphocholine + H2O = 2-hexadecanoyl-sn-glycero-3-phosphocholine + (9Z)-octadecenoate + H(+). The catalysed reaction is a 1-acyl-sn-glycero-3-phosphocholine + H2O = sn-glycerol 3-phosphocholine + a fatty acid + H(+). It functions in the pathway phospholipid metabolism. Its activity is regulated as follows. Activity is maximal in the presence of calcium. However, unlike phospholipases A2 whose catalytic activity is strictly calcium-dependent, this enzyme shows considerable catalytic activity on phosphatidylcholine emulsified in calcium free solution; the catalytic activity of VT-2a assayed in the absence of calcium ions is 18-20% of that assayed in solution containing calcium ions. Its function is as follows. Catalyzes the hydrolysis of glycerophospholipids such as phosphatidylcholine (1,2-diacyl-sn-glycero-3-phosphocholine) and has a moderate activity to hydrolyze lysoglycerophospholipids such as lysophosphatidylcholine (1-acyl-sn-glycero-3-phosphocholine), but is unable to hydrolyze sphingomyelin. In addition to acting as an allergen, it possesses a potent hemolytic activity on red blood cells of mice (98.8% of hemolysis at 3.0 ug/ml). The sequence is that of Phospholipase A1 verutoxin-2a from Vespa velutina (Asian yellow-legged hornet).